The chain runs to 254 residues: (2Z,6E)-farnesyl diphosphate synthase (254 aa).

Residue Asp-34 is part of the active site. Residue Asp-34 coordinates Mg(2+). Residues 35–38 (GNRR), Trp-39, His-52, and 80–82 (STD) contribute to the substrate site. The active-site Proton acceptor is the Asn-83. Residues Arg-86, Arg-203, and 209-211 (RLS) contribute to the substrate site. Residue Glu-222 participates in Mg(2+) binding.

This sequence belongs to the UPP synthase family. Z-FPP synthase subfamily. As to quaternary structure, homodimer. It depends on Mg(2+) as a cofactor.

The catalysed reaction is isopentenyl diphosphate + (2E)-geranyl diphosphate = (2Z,6E)-farnesyl diphosphate + diphosphate. Catalyzes the condensation of only one isopentenyl pyrophosphate (IPP) unit in the cis configuration to E-geranyl diphosphate (E-GPP) generating the 15 carbon product (2Z,6E)-farnesyl diphosphate (Z-FPP or EZ-FPP). Only geranyl diphosphate (GPP) can be used as isoprenyl acceptor. This Thermobifida fusca (strain YX) protein is (2Z,6E)-farnesyl diphosphate synthase.